A 600-amino-acid polypeptide reads, in one-letter code: MDKSKIRNFSIIAHIDHGKSTLADRILELTNTVEKREMQDQLLDSMDIERERGITIKLNSVQLKYHSKDNQDYIFNLIDTPGHVDFTYEVSRSLAACEGAILVVDASQGVEAQTLANVYLAIDSNLEIIPVINKIDLPSADVDKVKHEIEEIIGLDCSKSPLISAKTGLNVEDVLQAIVEKIPSPSDAIDNAPLKALIFDSYYDKYLGVVMSIRLKQGMLKVGDKIKLMSTNAEYEVTSLGIKTPKIVKKDFLEAGEVGWVAASIKTIKDVNVGDTITSVLNPADEPLDGYKKLKPMVYCGIYPIDTNKYQDFKEALEKIELSDSSLVYEPETSQALGFGFRCGFLGLLHMEVIQERLEREYNLELIATAPSVVYKVHLTNKQVIELDNPALLPEAQKISKIEEPFVEIKIATPSEYIGDLMNLCQNKLGIYKNMEVIDNNRRILIYQMPLAEIIFDFFNKLKSISKGYASFEYELIGYKESKLVRMDIKLNGEMVDAFSMIVNQKFAYQRGSALTLKLKELIPRQNFEVPVQATIGNKVISRETIKAYRKDVTWKLHAADKSRRKKLLEKQKEGKIKMKEIGTVEVPQEAFVAILKIDD.

The tr-type G domain occupies 4-186; it reads SKIRNFSIIA…AIVEKIPSPS (183 aa). GTP contacts are provided by residues 16–21 and 133–136; these read DHGKST and NKID.

This sequence belongs to the TRAFAC class translation factor GTPase superfamily. Classic translation factor GTPase family. LepA subfamily.

The protein resides in the cell membrane. It catalyses the reaction GTP + H2O = GDP + phosphate + H(+). Required for accurate and efficient protein synthesis under certain stress conditions. May act as a fidelity factor of the translation reaction, by catalyzing a one-codon backward translocation of tRNAs on improperly translocated ribosomes. Back-translocation proceeds from a post-translocation (POST) complex to a pre-translocation (PRE) complex, thus giving elongation factor G a second chance to translocate the tRNAs correctly. Binds to ribosomes in a GTP-dependent manner. The sequence is that of Elongation factor 4 from Mycoplasma mycoides subsp. mycoides SC (strain CCUG 32753 / NCTC 10114 / PG1).